The sequence spans 473 residues: Photosystem II CP43 reaction center protein (473 aa).

Residues 1-14 (MKILYSLRRFYHVE) constitute a propeptide that is removed on maturation. Thr-15 carries the N-acetylthreonine modification. Thr-15 carries the phosphothreonine modification. 5 helical membrane-spanning segments follow: residues 69 to 93 (LFEV…PHLA), 134 to 155 (LLGP…KDRN), 178 to 200 (KALY…RKIT), 255 to 275 (KPFA…LSYS), and 291 to 312 (WFNN…ASQA). Glu-367 lines the [CaMn4O5] cluster pocket. Residues 447-471 (RARAAAAGFEKGIDRDLEPVLFMTP) form a helical membrane-spanning segment.

It belongs to the PsbB/PsbC family. PsbC subfamily. PSII is composed of 1 copy each of membrane proteins PsbA, PsbB, PsbC, PsbD, PsbE, PsbF, PsbH, PsbI, PsbJ, PsbK, PsbL, PsbM, PsbT, PsbX, PsbY, PsbZ, Psb30/Ycf12, at least 3 peripheral proteins of the oxygen-evolving complex and a large number of cofactors. It forms dimeric complexes. Binds multiple chlorophylls and provides some of the ligands for the Ca-4Mn-5O cluster of the oxygen-evolving complex. It may also provide a ligand for a Cl- that is required for oxygen evolution. PSII binds additional chlorophylls, carotenoids and specific lipids. serves as cofactor.

The protein localises to the plastid. It localises to the chloroplast thylakoid membrane. Functionally, one of the components of the core complex of photosystem II (PSII). It binds chlorophyll and helps catalyze the primary light-induced photochemical processes of PSII. PSII is a light-driven water:plastoquinone oxidoreductase, using light energy to abstract electrons from H(2)O, generating O(2) and a proton gradient subsequently used for ATP formation. The sequence is that of Photosystem II CP43 reaction center protein from Lemna minor (Common duckweed).